Here is a 125-residue protein sequence, read N- to C-terminus: DNA-directed RNA polymerase subunit omega (125 aa).

This sequence belongs to the RNA polymerase subunit omega family. As to quaternary structure, the RNAP catalytic core consists of 2 alpha, 1 beta, 1 beta' and 1 omega subunit. When a sigma factor is associated with the core the holoenzyme is formed, which can initiate transcription.

The enzyme catalyses RNA(n) + a ribonucleoside 5'-triphosphate = RNA(n+1) + diphosphate. Functionally, promotes RNA polymerase assembly. Latches the N- and C-terminal regions of the beta' subunit thereby facilitating its interaction with the beta and alpha subunits. In Zymomonas mobilis subsp. mobilis (strain ATCC 31821 / ZM4 / CP4), this protein is DNA-directed RNA polymerase subunit omega.